Here is a 125-residue protein sequence, read N- to C-terminus: Small ribosomal subunit protein eS8 (125 aa).

The tract at residues 1–34 (MQWQGRSVRKSTGGRYSPSRGKRRREIGSAPAET) is disordered.

The protein belongs to the eukaryotic ribosomal protein eS8 family. As to quaternary structure, part of the 30S ribosomal subunit.

In Methanospirillum hungatei JF-1 (strain ATCC 27890 / DSM 864 / NBRC 100397 / JF-1), this protein is Small ribosomal subunit protein eS8.